We begin with the raw amino-acid sequence, 203 residues long: Large ribosomal subunit protein uL18 (203 aa).

Belongs to the universal ribosomal protein uL18 family. As to quaternary structure, part of the 50S ribosomal subunit. Contacts the 5S and 23S rRNAs.

In terms of biological role, this is one of the proteins that bind and probably mediate the attachment of the 5S RNA into the large ribosomal subunit, where it forms part of the central protuberance. The protein is Large ribosomal subunit protein uL18 of Pyrococcus furiosus (strain ATCC 43587 / DSM 3638 / JCM 8422 / Vc1).